Here is a 196-residue protein sequence, read N- to C-terminus: Molybdopterin synthase catalytic subunit (196 aa).

The tract at residues 1–29 (MSTLPSTDPPPLPASTSSQQPAVHIPPPS) is disordered. Substrate is bound by residues 145 to 146 (HR), lysine 161, and 168 to 170 (KRE). The disordered stretch occupies residues 174–196 (GEPPGQGEWRANRDTDPEGKSTS). The segment covering 183–196 (RANRDTDPEGKSTS) has biased composition (basic and acidic residues).

Belongs to the MoaE family. MOCS2B subfamily. Heterotetramer; composed of 2 small (MOCS2A) and 2 large (MOCS2B) subunits.

Its subcellular location is the cytoplasm. The catalysed reaction is 2 [molybdopterin-synthase sulfur-carrier protein]-C-terminal-Gly-aminoethanethioate + cyclic pyranopterin phosphate + H2O = molybdopterin + 2 [molybdopterin-synthase sulfur-carrier protein]-C-terminal Gly-Gly + 2 H(+). It functions in the pathway cofactor biosynthesis; molybdopterin biosynthesis. Functionally, catalytic subunit of the molybdopterin synthase complex, a complex that catalyzes the conversion of precursor Z into molybdopterin. Acts by mediating the incorporation of 2 sulfur atoms from thiocarboxylated MOCS2A into precursor Z to generate a dithiolene group. In Coccidioides immitis (strain RS) (Valley fever fungus), this protein is Molybdopterin synthase catalytic subunit.